A 263-amino-acid polypeptide reads, in one-letter code: Protein sco1 (263 aa).

The Cu cation site is built by Cys-130, Cys-134, and His-222.

Belongs to the SCO1/2 family.

Its subcellular location is the mitochondrion inner membrane. In terms of biological role, acts as a copper chaperone, transporting copper to the Cu(A) site on the cytochrome c oxidase subunit II (COX2). This Schizosaccharomyces pombe (strain 972 / ATCC 24843) (Fission yeast) protein is Protein sco1 (sco1).